The following is an 80-amino-acid chain: Exodeoxyribonuclease 7 small subunit (80 aa).

The protein belongs to the XseB family. Heterooligomer composed of large and small subunits.

Its subcellular location is the cytoplasm. It carries out the reaction Exonucleolytic cleavage in either 5'- to 3'- or 3'- to 5'-direction to yield nucleoside 5'-phosphates.. Bidirectionally degrades single-stranded DNA into large acid-insoluble oligonucleotides, which are then degraded further into small acid-soluble oligonucleotides. The sequence is that of Exodeoxyribonuclease 7 small subunit from Pseudomonas fluorescens (strain SBW25).